The sequence spans 506 residues: Maturase K (506 aa).

It belongs to the intron maturase 2 family. MatK subfamily.

It localises to the plastid. The protein localises to the chloroplast. In terms of biological role, usually encoded in the trnK tRNA gene intron. Probably assists in splicing its own and other chloroplast group II introns. The sequence is that of Maturase K from Trifolium spumosum (Mediterranean clover).